We begin with the raw amino-acid sequence, 208 residues long: MKVVEVKHPLIKHKIGLMREGEISTKRFRELATEVGSLLTYEATSDFETEKVTINGWNGPVEVDQIKGKKVTVVPILRAGLGMMDGVLEHIPSARISVVGIYRDEETLEPVPYFNKLASNIDERIALVVDPMLATGGSMIATLDLLKEKGCKHFKVLVLVAAPEGIEALEKAHPDVELYTAAIDEKLNDKGYIVPGLGDAGDKIFGTK.

5-phospho-alpha-D-ribose 1-diphosphate contacts are provided by residues R78, R103, and 130 to 138 (DPMLATGGS). Uracil is bound by residues I193 and 198–200 (GDA). D199 is a 5-phospho-alpha-D-ribose 1-diphosphate binding site.

Belongs to the UPRTase family. The cofactor is Mg(2+).

It carries out the reaction UMP + diphosphate = 5-phospho-alpha-D-ribose 1-diphosphate + uracil. It participates in pyrimidine metabolism; UMP biosynthesis via salvage pathway; UMP from uracil: step 1/1. Its activity is regulated as follows. Allosterically activated by GTP. Functionally, catalyzes the conversion of uracil and 5-phospho-alpha-D-ribose 1-diphosphate (PRPP) to UMP and diphosphate. The sequence is that of Uracil phosphoribosyltransferase from Aliivibrio fischeri (strain MJ11) (Vibrio fischeri).